Consider the following 214-residue polypeptide: N-(5'-phosphoribosyl)anthranilate isomerase (214 aa).

Belongs to the TrpF family.

The catalysed reaction is N-(5-phospho-beta-D-ribosyl)anthranilate = 1-(2-carboxyphenylamino)-1-deoxy-D-ribulose 5-phosphate. It functions in the pathway amino-acid biosynthesis; L-tryptophan biosynthesis; L-tryptophan from chorismate: step 3/5. This is N-(5'-phosphoribosyl)anthranilate isomerase from Halorubrum lacusprofundi (strain ATCC 49239 / DSM 5036 / JCM 8891 / ACAM 34).